The following is a 258-amino-acid chain: Axonemal dynein light intermediate polypeptide 1 (258 aa).

Disordered regions lie at residues 1–60 (MIPP…CVPD) and 202–231 (DLERQVNEQKAKCEATEKRESERRQVEEKK). Residues 176–255 (MRKALQAEQG…LKAQLEGIIA (80 aa)) are a coiled coil.

This sequence belongs to the inner dynein arm light chain family. Interacts with CFAP45. Interacts with DYNC1H1.

The protein resides in the cell projection. The protein localises to the cilium. It is found in the flagellum. Its subcellular location is the dynein axonemal particle. It localises to the cytoplasm. Its function is as follows. Involved in sperm flagellum assembly. In Rattus norvegicus (Rat), this protein is Axonemal dynein light intermediate polypeptide 1.